Reading from the N-terminus, the 81-residue chain is UPF0180 protein RBAM_013970 (81 aa).

Belongs to the UPF0180 family.

The protein is UPF0180 protein RBAM_013970 of Bacillus velezensis (strain DSM 23117 / BGSC 10A6 / LMG 26770 / FZB42) (Bacillus amyloliquefaciens subsp. plantarum).